Consider the following 245-residue polypeptide: Large ribosomal subunit protein uL3 (245 aa).

Residue Gln151 is modified to N5-methylglutamine. The tract at residues 214 to 245 is disordered; that stretch reads KDAPQPGKYRLANSAAPQPAEADAASDTGAQA. A compositionally biased stretch (low complexity) spans 225 to 245; the sequence is ANSAAPQPAEADAASDTGAQA.

Belongs to the universal ribosomal protein uL3 family. As to quaternary structure, part of the 50S ribosomal subunit. Forms a cluster with proteins L14 and L19. Post-translationally, methylated by PrmB.

One of the primary rRNA binding proteins, it binds directly near the 3'-end of the 23S rRNA, where it nucleates assembly of the 50S subunit. The protein is Large ribosomal subunit protein uL3 of Methylocella silvestris (strain DSM 15510 / CIP 108128 / LMG 27833 / NCIMB 13906 / BL2).